The following is a 164-amino-acid chain: Replication restart protein DnaT (164 aa).

The protein belongs to the DnaT family. Homooligomerizes. Interacts with PriB. Component of the replication restart primosome. Primosome assembly occurs via a 'hand-off' mechanism. PriA binds to replication forks, subsequently PriB then DnaT bind; DnaT then displaces ssDNA to generate the helicase loading substrate.

Functionally, involved in the restart of stalled replication forks, which reloads the replicative helicase on sites other than the origin of replication. Can function in multiple replication restart pathways. Displaces ssDNA from a PriB-ssDNA complex. Probably forms a spiral filament on ssDNA. The protein is Replication restart protein DnaT of Buchnera aphidicola subsp. Acyrthosiphon pisum (strain 5A).